We begin with the raw amino-acid sequence, 158 residues long: QGVNIYNISAGTSVDLAAPVTTGDIVTFFSSALNLNAGAGNPNNTTLNLFAENGAYLLHIAFRLQENVIIFNSRQPDGPWLVEQRVSDVANQFAGIDGKAMVTVFDHGDKYQVVINEKTVIQYTKQISGLTLSLSYNATEETSIFSTVVEAVTYTGLA.

At Gln1 the chain carries Blocked amino end (Gln). One can recognise a Galectin domain in the interval 12–155 (TSVDLAAPVT…STVVEAVTYT (144 aa)). The N-acetyl-alpha-neuraminyl-(2-&gt;3)-beta-D-galactosyl-(1-&gt;4)-beta-D-glucose site is built by Asn43, His59, Arg63, Asn72, Arg74, Trp80, and Glu83.

In terms of assembly, homodimer. Detected in the fruiting body.

Functionally, anti-tumor lectin with DNase activity. Inhibits the growth of several tumor cell lines in vitro. Induces lymphocyte infiltration and necrosis of tumor cells in a mouse tumor model. Induces apoptosis in HeLa cells. Binds N-acetylneuraminyl lactose (N-acetyl-alpha-neuraminyl-(2-&gt;3)-beta-D-galactosyl-(1-&gt;4)-beta-D-glucose). The sequence is that of Anti-tumor lectin from Cyclocybe aegerita (Black poplar mushroom).